We begin with the raw amino-acid sequence, 149 residues long: 3-hydroxyacyl-[acyl-carrier-protein] dehydratase FabZ (149 aa).

Residue H49 is part of the active site.

This sequence belongs to the thioester dehydratase family. FabZ subfamily.

The protein resides in the cytoplasm. It catalyses the reaction a (3R)-hydroxyacyl-[ACP] = a (2E)-enoyl-[ACP] + H2O. In terms of biological role, involved in unsaturated fatty acids biosynthesis. Catalyzes the dehydration of short chain beta-hydroxyacyl-ACPs and long chain saturated and unsaturated beta-hydroxyacyl-ACPs. The sequence is that of 3-hydroxyacyl-[acyl-carrier-protein] dehydratase FabZ from Sulfurovum sp. (strain NBC37-1).